The sequence spans 233 residues: Biosynthetic peptidoglycan transglycosylase (233 aa).

Residues 8–28 traverse the membrane as a helical segment; sequence LIALPVGIFIFFNAYVYGNII.

It belongs to the glycosyltransferase 51 family.

It is found in the cell inner membrane. It catalyses the reaction [GlcNAc-(1-&gt;4)-Mur2Ac(oyl-L-Ala-gamma-D-Glu-L-Lys-D-Ala-D-Ala)](n)-di-trans,octa-cis-undecaprenyl diphosphate + beta-D-GlcNAc-(1-&gt;4)-Mur2Ac(oyl-L-Ala-gamma-D-Glu-L-Lys-D-Ala-D-Ala)-di-trans,octa-cis-undecaprenyl diphosphate = [GlcNAc-(1-&gt;4)-Mur2Ac(oyl-L-Ala-gamma-D-Glu-L-Lys-D-Ala-D-Ala)](n+1)-di-trans,octa-cis-undecaprenyl diphosphate + di-trans,octa-cis-undecaprenyl diphosphate + H(+). Its pathway is cell wall biogenesis; peptidoglycan biosynthesis. Functionally, peptidoglycan polymerase that catalyzes glycan chain elongation from lipid-linked precursors. This is Biosynthetic peptidoglycan transglycosylase from Neisseria gonorrhoeae (strain NCCP11945).